A 712-amino-acid chain; its full sequence is Potassium transporter 1 (712 aa).

Over Met-1 to Thr-19 the chain is Cytoplasmic. Residues Leu-20 to Leu-40 traverse the membrane as a helical segment. Residues Ser-41 to Gly-67 lie on the Extracellular side of the membrane. Residues Val-68–Val-88 traverse the membrane as a helical segment. Topologically, residues Leu-89–Lys-154 are cytoplasmic. A helical transmembrane segment spans residues Cys-155–Pro-175. At Thr-176–Lys-189 the chain is on the extracellular side. The chain crosses the membrane as a helical span at residues Ile-190–Phe-210. Residues Ser-211–Arg-219 are Cytoplasmic-facing. A helical transmembrane segment spans residues Val-220–Val-240. Residues Tyr-241 to Gly-267 lie on the Extracellular side of the membrane. Residues Val-268 to Phe-288 traverse the membrane as a helical segment. Over Ala-289–Lys-300 the chain is Cytoplasmic. Residues Val-301–Phe-321 form a helical membrane-spanning segment. Over Leu-322–Pro-340 the chain is Extracellular. A helical membrane pass occupies residues Val-341 to Ile-361. Topologically, residues Ser-362–Gln-392 are cytoplasmic. Residues Ile-393 to Leu-413 traverse the membrane as a helical segment. Residues Arg-414–Gly-424 are Extracellular-facing. The chain crosses the membrane as a helical span at residues Leu-425–Val-445. Topologically, residues Trp-446–Arg-449 are cytoplasmic. The chain crosses the membrane as a helical span at residues Ile-450–Ser-470. Over Cys-471 to Lys-474 the chain is Extracellular. A helical membrane pass occupies residues Val-475–Ile-495. The Cytoplasmic portion of the chain corresponds to Trp-496 to Val-712.

It belongs to the HAK/KUP transporter (TC 2.A.72.3) family. As to expression, detected in the whole mature plant but preferentially expressed in roots and stems, and in potassium-starved plants.

The protein localises to the cell membrane. Its function is as follows. High-affinity potassium transporter that could play a major role in the uptake of potassium from the rhizosphere. May act as a low-affinity potassium transporter under high potassium concentrations. Could also transport rubidium. The sequence is that of Potassium transporter 1 (POT1) from Arabidopsis thaliana (Mouse-ear cress).